The chain runs to 332 residues: Fructose-1,6-bisphosphatase class 1 (332 aa).

Positions 89, 110, 112, and 113 each coordinate Mg(2+). Substrate contacts are provided by residues 113–116 (DGSS), N206, Y239, 257–259 (YLY), and K269. E275 is a Mg(2+) binding site.

The protein belongs to the FBPase class 1 family. Homotetramer. The cofactor is Mg(2+).

Its subcellular location is the cytoplasm. It catalyses the reaction beta-D-fructose 1,6-bisphosphate + H2O = beta-D-fructose 6-phosphate + phosphate. The protein operates within carbohydrate biosynthesis; gluconeogenesis. The protein is Fructose-1,6-bisphosphatase class 1 of Salmonella arizonae (strain ATCC BAA-731 / CDC346-86 / RSK2980).